The following is a 511-amino-acid chain: MSQNIDKIQDHVELFHQPEYQELFENKKALQGMASDEKVAEIAEWTKTWEYREKNFAREALTINPAKACQPLGAILAAVGFEGTLPFVHGSQGCVAYFRTHFTRHFKEPFSGVSSSMTEDAAVFGGLKNMIEGLQNAYSLYQPKMIAVCTTCMAEVIGDDLGSFIGNAKADGSVPQDFPVPFAHTPSFVGSHITGYDNMMKAILLNLTDGKKPTTSNGKVNFIPGFETYVGNLRELKHLTSAMGVDATILGDNELYLDSPNDGEFKMYQGGTTLEEGADAINATKTIALQTYPTVKTLEYIEKEWQQPTATYRPWGIKGTDEFVMALSELTGNPVPPELELERGRAVDAMTDSHAWLHGKKAAIYGDPDLVMGMLQFMLEMGVEPVHVLVHNSTTEFEEEAKALLASSPYGQKATVWGGKDLWHLRSLLFTEPVDFLIGNSYGKYLWRDTKIPLIRIGYPIFDRHHLHRYSTIGYNGAINLLNWIVNGLFEEIDRNTNIPSKTDISFDLVR.

Positions 69, 94, 152, and 187 each coordinate [8Fe-7S] cluster.

This sequence belongs to the NifD/NifK/NifE/NifN family. Tetramer of two alpha and two beta chains. Forms complex with the iron protein (nitrogenase component 2). [8Fe-7S] cluster is required as a cofactor.

The catalysed reaction is N2 + 8 reduced [2Fe-2S]-[ferredoxin] + 16 ATP + 16 H2O = H2 + 8 oxidized [2Fe-2S]-[ferredoxin] + 2 NH4(+) + 16 ADP + 16 phosphate + 6 H(+). Its function is as follows. This molybdenum-iron protein is part of the nitrogenase complex that catalyzes the key enzymatic reactions in nitrogen fixation. The polypeptide is Nitrogenase molybdenum-iron protein beta chain (nifK) (Rippkaea orientalis (strain PCC 8801 / RF-1) (Cyanothece sp. (strain PCC 8801))).